The primary structure comprises 1197 residues: DExH-box ATP-dependent RNA helicase DExH3 (1197 aa).

A Helicase ATP-binding domain is found at 309–476 (LKAIAANQVV…FGGAPAMHIP (168 aa)). 322–329 (GETGCGKT) provides a ligand contact to ATP. The DEIH box motif lies at 423–426 (DEIH). One can recognise a Helicase C-terminal domain in the interval 564-738 (LIENVLCHIV…SLCLQIKSLG (175 aa)).

It belongs to the DExH box helicase family.

The catalysed reaction is ATP + H2O = ADP + phosphate + H(+). This chain is DExH-box ATP-dependent RNA helicase DExH3, found in Arabidopsis thaliana (Mouse-ear cress).